The chain runs to 356 residues: Tyrosine recombinase XerS (356 aa).

Residues 16–121 (IMPSYVLEYY…ALSSLYKYLT (106 aa)) form the Core-binding (CB) domain. A Tyr recombinase domain is found at 169 to 354 (GFLDYIDNEY…INEEQKNALD (186 aa)). Residues Arg-210, Lys-234, His-306, Arg-309, and His-332 contribute to the active site. The active-site O-(3'-phospho-DNA)-tyrosine intermediate is Tyr-341.

This sequence belongs to the 'phage' integrase family. XerS subfamily.

The protein localises to the cytoplasm. With respect to regulation, ftsK is required for recombination. Functionally, site-specific tyrosine recombinase, which acts by catalyzing the cutting and rejoining of the recombining DNA molecules. Essential to convert dimers of the bacterial chromosome into monomers to permit their segregation at cell division. This is Tyrosine recombinase XerS from Lactococcus lactis subsp. lactis (strain IL1403) (Streptococcus lactis).